The following is an 83-amino-acid chain: Kunitz serine protease inhibitor Pr-mulgin 1 (83 aa).

The N-terminal stretch at 1–24 is a signal peptide; it reads MSSGGLLLLLGLLTLWEVLTPVSS. The 51-residue stretch at 31-81 folds into the BPTI/Kunitz inhibitor domain; sequence CELPADPGPCNGLFQAFYYNPVQRKCLKFRYGGCKGNPNTFKTIEECKRTC. 3 disulfides stabilise this stretch: Cys31-Cys81, Cys40-Cys64, and Cys56-Cys77.

Belongs to the venom Kunitz-type family. As to expression, expressed by the venom gland.

It localises to the secreted. Functionally, specifically inhibits MMP2 activity (EC(50)=100 nM and Ki=60 nM). The chain is Kunitz serine protease inhibitor Pr-mulgin 1 from Pseudechis rossignolii (Papuan pigmy mulga snake).